A 315-amino-acid chain; its full sequence is Protein ADP-ribosyltransferase (315 aa).

Residues 13 to 299 (LMDEKTKQAE…TTALRNDSTT (287 aa)) enclose the Deacetylase sirtuin-type domain. NAD(+)-binding positions include Ala-40, 123 to 126 (TNAD), and Gln-143. Zn(2+) contacts are provided by Cys-151, Cys-155, Cys-186, and Cys-189. NAD(+)-binding positions include 238–240 (YTT), Asn-264, Tyr-268, and Ile-285.

The protein belongs to the sirtuin family. Class M subfamily. Requires Zn(2+) as cofactor.

It carries out the reaction L-aspartyl-[protein] + NAD(+) = 4-O-(ADP-D-ribosyl)-L-aspartyl-[protein] + nicotinamide. With respect to regulation, is inhibited by Tenovin-6 in vitro, but not by nicotinamide. Its function is as follows. Catalyzes specifically the mono-ADP-ribosylation of GcvH-L (SAV0324). This activity is dependent on prior lipoylation of the target protein. May be involved in the modulation of the response to host-derived oxidative stress. In contrast to other sirtuin classes, lacks protein deacylase activity, being unable to catalyze delipoylation, debiotinylation, deacetylation and desuccinylation of proteins. In Staphylococcus aureus (strain Mu50 / ATCC 700699), this protein is Protein ADP-ribosyltransferase.